Reading from the N-terminus, the 139-residue chain is NADH-quinone oxidoreductase subunit A (139 aa).

The next 3 membrane-spanning stretches (helical) occupy residues 11 to 31 (LWPL…MLAL), 70 to 90 (LIAI…AWAI), and 97 to 117 (WPGY…LVYL).

It belongs to the complex I subunit 3 family. In terms of assembly, NDH-1 is composed of 14 different subunits. Subunits NuoA, H, J, K, L, M, N constitute the membrane sector of the complex.

It is found in the cell inner membrane. It catalyses the reaction a quinone + NADH + 5 H(+)(in) = a quinol + NAD(+) + 4 H(+)(out). NDH-1 shuttles electrons from NADH, via FMN and iron-sulfur (Fe-S) centers, to quinones in the respiratory chain. The immediate electron acceptor for the enzyme in this species is believed to be ubiquinone. Couples the redox reaction to proton translocation (for every two electrons transferred, four hydrogen ions are translocated across the cytoplasmic membrane), and thus conserves the redox energy in a proton gradient. This is NADH-quinone oxidoreductase subunit A from Methylococcus capsulatus (strain ATCC 33009 / NCIMB 11132 / Bath).